Here is a 506-residue protein sequence, read N- to C-terminus: Tripartite terminase subunit 3 (506 aa).

Glu-128 acts as the For ATPase activity in catalysis. Catalysis depends on for nuclease activity residues Asp-282, Glu-354, and Asp-475.

It belongs to the herpesviridae TRM3 protein family. As to quaternary structure, interacts with the terminase subunits TRM1 and TRM2. Interacts with portal protein.

Its subcellular location is the host nucleus. In terms of biological role, component of the molecular motor that translocates viral genomic DNA in empty capsid during DNA packaging. Forms a tripartite terminase complex together with TRM1 and TRM2 in the host cytoplasm. Once the complex reaches the host nucleus, it interacts with the capsid portal vertex. This portal forms a ring in which genomic DNA is translocated into the capsid. TRM3 carries an RNase H-like nuclease activity that plays an important role for the cleavage of concatemeric viral DNA into unit length genomes. The chain is Tripartite terminase subunit 3 from Amazona oratrix (yellow-headed parrot).